A 613-amino-acid polypeptide reads, in one-letter code: 9-cis-epoxycarotenoid dioxygenase NCED5, chloroplastic (613 aa).

Over residues 1–15 (MPTTFTPNSPASSCS) the composition is skewed to polar residues. Residues 1–36 (MPTTFTPNSPASSCSIHHRASPSRGARNSVRFTRPR) constitute a chloroplast transit peptide. The interval 1-62 (MPTTFTPNSP…PPAYVPPPPP (62 aa)) is disordered. The span at 37-50 (AAAAATNSVLSAPS) shows a compositional bias: low complexity. The span at 51–62 (SVPPAYVPPPPP) shows a compositional bias: pro residues. 4 residues coordinate Fe cation: His305, His354, His419, and His600.

It belongs to the carotenoid oxygenase family. The cofactor is Fe(2+).

The protein resides in the plastid. Its subcellular location is the chloroplast. It carries out the reaction a 9-cis-epoxycarotenoid + O2 = a 12'-apo-carotenal + 2-cis,4-trans-xanthoxin. It catalyses the reaction 9-cis-violaxanthin + O2 = (3S,5R,6S)-5,6-epoxy-3-hydroxy-5,6-dihydro-12'-apo-beta-caroten-12'-al + 2-cis,4-trans-xanthoxin. The enzyme catalyses 9'-cis-neoxanthin + O2 = (3S,5R,6R)-3,5-dihydroxy-6,7-didehydro-5,6-dihydro-12'-apo-beta-caroten-12'-al + 2-cis,4-trans-xanthoxin. In terms of biological role, has a 11,12(11',12') 9-cis epoxycarotenoid cleavage activity. Catalyzes the first step of abscisic-acid biosynthesis from carotenoids. The sequence is that of 9-cis-epoxycarotenoid dioxygenase NCED5, chloroplastic from Oryza sativa subsp. japonica (Rice).